A 137-amino-acid chain; its full sequence is Large ribosomal subunit protein uL16 (137 aa).

Residues 1–16 (MLQPKRTKFRKMQKGR) show a composition bias toward basic residues. The interval 1-22 (MLQPKRTKFRKMQKGRIRGEAK) is disordered.

The protein belongs to the universal ribosomal protein uL16 family. As to quaternary structure, part of the 50S ribosomal subunit.

In terms of biological role, binds 23S rRNA and is also seen to make contacts with the A and possibly P site tRNAs. The sequence is that of Large ribosomal subunit protein uL16 from Jannaschia sp. (strain CCS1).